Here is a 304-residue protein sequence, read N- to C-terminus: Aquaglyceroporin-3 (304 aa).

The Cytoplasmic portion of the chain corresponds to 1-68 (MQSQPDNVAY…LRLNYRDYMG (68 aa)). The helical transmembrane segment at 69 to 89 (ELLGTFVLLFMGNGVVATVII) threads the bilayer. Residues 90–95 (DGKLGF) are Extracellular-facing. The helical transmembrane segment at 96 to 116 (LSITLGWGIAVTMALYVSLGI) threads the bilayer. Topologically, residues 117-142 (SSGHLNPAVTVGNAVFGDFPWRKVPG) are cytoplasmic. A helical transmembrane segment spans residues 143–163 (YIAAQMLGAFLGAACAYGVFA). The Extracellular portion of the chain corresponds to 164-196 (DLLKAHGGGELIAFGEKGTAGVFSTYPRDSNGL). A helical transmembrane segment spans residues 197–217 (FSCIFGEFICTAMLLFCVCGI). Over 218-231 (FDPNNSPAKGHEPL) the chain is Cytoplasmic. A helical membrane pass occupies residues 232–252 (AVGALVFAIGNNIGYSTGYAI). The Extracellular segment spans residues 253 to 277 (NPARDFGPRVFSSFLYGGEVFSHAN). Residues 278 to 298 (YYFWVPLVIPLFGGIFGLFLY) traverse the membrane as a helical segment. Over 299 to 304 (KYFVPH) the chain is Cytoplasmic.

Belongs to the MIP/aquaporin (TC 1.A.8) family.

It localises to the cell membrane. It catalyses the reaction glycerol(in) = glycerol(out). The enzyme catalyses H2O(in) = H2O(out). The catalysed reaction is urea(in) = urea(out). In terms of biological role, mediates water and glycerol transport across the cell membrane. Permeable to urea. Permeable to methylamine/methylammonium. Permeable to dihydroxyacetone. Permeable to erythritol and ribitol. This chain is Aquaglyceroporin-3, found in Trypanosoma brucei brucei.